A 1042-amino-acid polypeptide reads, in one-letter code: Starch synthase 3, chloroplastic/amyloplastic (1042 aa).

Residues 1–44 (MISYFLNQDFSRKKQGRMAASGPKSSGPRGFGRRTTVGSAQKRT) constitute a chloroplast transit peptide. The disordered stretch occupies residues 1 to 63 (MISYFLNQDF…NATSTATNEV (63 aa)). The segment covering 54-63 (NATSTATNEV) has biased composition (polar residues). The stretch at 247–302 (ENFLLEEKLREQEKLAKEEAERERQKEEKRRIEAQKAAIEADRAQAKAETQKRREL) forms a coiled coil. Lysine 608 lines the ADP-alpha-D-glucose pocket.

Belongs to the glycosyltransferase 1 family. Bacterial/plant glycogen synthase subfamily. Expressed in leaves and flowers.

The protein resides in the plastid. It is found in the chloroplast. Its subcellular location is the amyloplast. It carries out the reaction [(1-&gt;4)-alpha-D-glucosyl](n) + ADP-alpha-D-glucose = [(1-&gt;4)-alpha-D-glucosyl](n+1) + ADP + H(+). It participates in glycan biosynthesis; starch biosynthesis. Functionally, involved in the synthesis of glycan chains within amylopectin in leaves. May play a regulatory role in the control of starch accumulation in plastids. In Arabidopsis thaliana (Mouse-ear cress), this protein is Starch synthase 3, chloroplastic/amyloplastic (SS3).